The sequence spans 188 residues: Elongation factor P (188 aa).

It belongs to the elongation factor P family.

Its subcellular location is the cytoplasm. Its pathway is protein biosynthesis; polypeptide chain elongation. Functionally, involved in peptide bond synthesis. Stimulates efficient translation and peptide-bond synthesis on native or reconstituted 70S ribosomes in vitro. Probably functions indirectly by altering the affinity of the ribosome for aminoacyl-tRNA, thus increasing their reactivity as acceptors for peptidyl transferase. This chain is Elongation factor P, found in Methylorubrum extorquens (strain CM4 / NCIMB 13688) (Methylobacterium extorquens).